The sequence spans 63 residues: Large ribosomal subunit protein bL28 (63 aa).

Belongs to the bacterial ribosomal protein bL28 family.

In Thermomicrobium roseum (strain ATCC 27502 / DSM 5159 / P-2), this protein is Large ribosomal subunit protein bL28.